We begin with the raw amino-acid sequence, 685 residues long: Methionine--tRNA ligase (685 aa).

Residues 12–22 (PYANGSIHLGH) carry the 'HIGH' region motif. Residues Cys143, Cys146, Cys156, and Cys159 each contribute to the Zn(2+) site. The short motif at 339-343 (KMSKS) is the 'KMSKS' region element. An ATP-binding site is contributed by Lys342. The tRNA-binding domain occupies 582–685 (DFMKIDMRVA…AGAQPGDKVG (104 aa)).

It belongs to the class-I aminoacyl-tRNA synthetase family. MetG type 1 subfamily. As to quaternary structure, homodimer. The cofactor is Zn(2+).

It is found in the cytoplasm. It carries out the reaction tRNA(Met) + L-methionine + ATP = L-methionyl-tRNA(Met) + AMP + diphosphate. Functionally, is required not only for elongation of protein synthesis but also for the initiation of all mRNA translation through initiator tRNA(fMet) aminoacylation. The chain is Methionine--tRNA ligase from Neisseria meningitidis serogroup C (strain 053442).